A 78-amino-acid chain; its full sequence is Bowman-Birk type proteinase inhibitors I-A, I-B, and I-A' (78 aa).

Disulfide bonds link C18/C72, C19/C34, C22/C68, C24/C32, C42/C49, C46/C61, and C51/C59.

This sequence belongs to the Bowman-Birk serine protease inhibitor family.

Functionally, these inhibitors strongly inhibit trypsin. The chain is Bowman-Birk type proteinase inhibitors I-A, I-B, and I-A' from Phaseolus angularis (Azuki bean).